Reading from the N-terminus, the 320-residue chain is ATP-dependent 6-phosphofructokinase (320 aa).

G12 lines the ATP pocket. Residues 22–26 and 55–60 each bind ADP; these read RGVVR and RYSVSD. ATP contacts are provided by residues 73–74 and 103–106; these read RF and GDGS. Mg(2+) is bound at residue D104. 126-128 lines the substrate pocket; the sequence is TID. Residue D128 is the Proton acceptor of the active site. Residue R155 participates in ADP binding. Residues R163 and 170–172 each bind substrate; that span reads MGR. ADP contacts are provided by residues 186–188, K212, and 214–216; these read GCE and KKH. Residues E223, R244, and 250-253 contribute to the substrate site; that span reads HIQR.

Belongs to the phosphofructokinase type A (PFKA) family. ATP-dependent PFK group I subfamily. Prokaryotic clade 'B1' sub-subfamily. As to quaternary structure, homotetramer. Mg(2+) is required as a cofactor.

Its subcellular location is the cytoplasm. The catalysed reaction is beta-D-fructose 6-phosphate + ATP = beta-D-fructose 1,6-bisphosphate + ADP + H(+). It functions in the pathway carbohydrate degradation; glycolysis; D-glyceraldehyde 3-phosphate and glycerone phosphate from D-glucose: step 3/4. Allosterically activated by ADP and other diphosphonucleosides, and allosterically inhibited by phosphoenolpyruvate. Functionally, catalyzes the phosphorylation of D-fructose 6-phosphate to fructose 1,6-bisphosphate by ATP, the first committing step of glycolysis. The sequence is that of ATP-dependent 6-phosphofructokinase from Enterobacter cloacae.